The sequence spans 120 residues: PYEKIGAELVKEVAKKTDDVAGDGTTTATVLAQALVREGLRNVAAGANPLGLKRGIEKAVEKVTETLLKSAKEVETKDQIAATAAISAGDQSIGDLIAEAMDKVGNEGVITVEESNTFGL.

Residue Asp23–Thr27 coordinates ATP.

This sequence belongs to the chaperonin (HSP60) family. Forms a cylinder of 14 subunits composed of two heptameric rings stacked back-to-back. Interacts with the co-chaperonin GroES.

The protein resides in the cytoplasm. The catalysed reaction is ATP + H2O + a folded polypeptide = ADP + phosphate + an unfolded polypeptide.. Together with its co-chaperonin GroES, plays an essential role in assisting protein folding. The GroEL-GroES system forms a nano-cage that allows encapsulation of the non-native substrate proteins and provides a physical environment optimized to promote and accelerate protein folding. This Mycobacterium intracellulare protein is Chaperonin GroEL.